Here is a 429-residue protein sequence, read N- to C-terminus: Adenylosuccinate synthetase (429 aa).

GTP-binding positions include 12 to 18 and 40 to 42; these read GDEGKGK and GHT. Aspartate 13 serves as the catalytic Proton acceptor. Mg(2+) contacts are provided by aspartate 13 and glycine 40. IMP contacts are provided by residues 13 to 16, 38 to 41, threonine 128, arginine 142, glutamine 223, threonine 238, and arginine 302; these read DEGK and NAGH. Residue histidine 41 is the Proton donor of the active site. Position 298–304 (298–304) interacts with substrate; the sequence is VNTGRPR. GTP-binding positions include arginine 304, 330-332, and 412-414; these read KLD and GVG.

It belongs to the adenylosuccinate synthetase family. Homodimer. It depends on Mg(2+) as a cofactor.

The protein resides in the cytoplasm. It catalyses the reaction IMP + L-aspartate + GTP = N(6)-(1,2-dicarboxyethyl)-AMP + GDP + phosphate + 2 H(+). It functions in the pathway purine metabolism; AMP biosynthesis via de novo pathway; AMP from IMP: step 1/2. Functionally, plays an important role in the de novo pathway of purine nucleotide biosynthesis. Catalyzes the first committed step in the biosynthesis of AMP from IMP. The polypeptide is Adenylosuccinate synthetase (Corynebacterium urealyticum (strain ATCC 43042 / DSM 7109)).